A 121-amino-acid chain; its full sequence is UPF0295 protein BH0952 (121 aa).

2 helical membrane-spanning segments follow: residues 12–32 (IRTF…IGIF) and 41–61 (VLAM…YFWI).

Belongs to the UPF0295 family.

The protein localises to the cell membrane. The polypeptide is UPF0295 protein BH0952 (Halalkalibacterium halodurans (strain ATCC BAA-125 / DSM 18197 / FERM 7344 / JCM 9153 / C-125) (Bacillus halodurans)).